A 92-amino-acid polypeptide reads, in one-letter code: Transcription factor PRE1 (92 aa).

Positions Arg-4–Leu-59 constitute a bHLH domain.

As to quaternary structure, interacts with IBH1 and HFR1. Expressed in roots, leaves, stems and flowers.

It is found in the nucleus. Atypical and probable non DNA-binding bHLH transcription factor that integrates multiple signaling pathways to regulate cell elongation and plant development. Binds IBH1, forming a pair of antagonistic bHLH transcription factors that function downstream of BZR1 to mediate brassinosteroid regulation of cell elongation. Regulates light responses by binding and inhibiting the activity of the bHLH transcription factor HFR1, a critical regulator of light signaling and shade avoidance. May have a regulatory role in various aspects of gibberellin-dependent growth and development. The chain is Transcription factor PRE1 (PRE1) from Arabidopsis thaliana (Mouse-ear cress).